The chain runs to 223 residues: Peptidyl-prolyl cis-trans isomerase FKBP16-3, chloroplastic (223 aa).

The transit peptide at M1–I36 directs the protein to the chloroplast. The transit peptide at A37–A76 directs the protein to the thylakoid. Positions G124–P216 constitute a PPIase FKBP-type domain.

This sequence belongs to the FKBP-type PPIase family.

It is found in the plastid. The protein localises to the chloroplast thylakoid lumen. The enzyme catalyses [protein]-peptidylproline (omega=180) = [protein]-peptidylproline (omega=0). Its function is as follows. PPIases accelerate the folding of proteins. It catalyzes the cis-trans isomerization of proline imidic peptide bonds in oligopeptides. The chain is Peptidyl-prolyl cis-trans isomerase FKBP16-3, chloroplastic (FKBP16-3) from Arabidopsis thaliana (Mouse-ear cress).